A 118-amino-acid polypeptide reads, in one-letter code: Protein RALF-like 24 (118 aa).

Positions 1-22 (MSRSLALVYLSLLCLQTHLSIS) are cleaved as a signal peptide. Residues 23-63 (VTVPIPSVNGEIDAMLNRNGVIGEEEGEEMMPSEISRRVMM) constitute a propeptide, removed in mature form. 2 disulfides stabilise this stretch: Cys-81–Cys-91 and Cys-103–Cys-109.

Belongs to the plant rapid alkalinization factor (RALF) family. In terms of processing, proteolytically cleaved, probably by S1P, a subtilisin-like serine protease (subtilase).

The protein localises to the secreted. Cell signaling peptide that may regulate plant stress, growth, and development. Mediates a rapid alkalinization of extracellular space by mediating a transient increase in the cytoplasmic Ca(2+) concentration leading to a calcium-dependent signaling events through a cell surface receptor and a concomitant activation of some intracellular mitogen-activated protein kinases. This chain is Protein RALF-like 24 (RALFL24), found in Arabidopsis thaliana (Mouse-ear cress).